The chain runs to 890 residues: Protein FAM171A1 (890 aa).

A signal peptide spans 1-21; the sequence is MSRSATLLLCLLGCHVWKAVT. The Extracellular portion of the chain corresponds to 22 to 303; the sequence is KTLREPGAGA…VTQDITTYHT (282 aa). N-linked (GlcNAc...) asparagine glycosylation is found at Asn159, Asn190, and Asn194. Residues 304 to 324 form a helical membrane-spanning segment; the sequence is VFLLAILGGMAFILLVLLCLL. The Cytoplasmic segment spans residues 325-890; that stretch reads LYYCRRKCLK…ERPLMAFNIK (566 aa). Residues Ser358, Ser360, Ser371, Ser422, Ser443, and Ser525 each carry the phosphoserine modification. Disordered regions lie at residues 730–759 and 818–890; these read AGRN…RGDA and EGSS…FNIK. The span at 747–757 shows a compositional bias: basic and acidic residues; the sequence is NEPKSARKGRG. Polar residues predominate over residues 822–833; the sequence is RRSGGQLPSLQE. Phosphoserine is present on residues Ser849 and Ser855. Residues 858-869 are compositionally biased toward acidic residues; sequence EEEEDDDDDDQG. Positions 870 to 883 are enriched in basic and acidic residues; it reads EDKKSPWQKREERP.

Belongs to the FAM171 family. Interacts with ADAM10, NSG1 and OAZ1. As to expression, expressed in heart, brain, liver, skeletal muscle, kidney and pancreas. In brain, expressed by glia, pyramidal neurons and astrocytes (at protein level). Highly expressed in placental trophoblasts.

The protein resides in the cell membrane. Its function is as follows. Involved in the regulation of the cytoskeletal dynamics, plays a role in actin stress fiber formation. The sequence is that of Protein FAM171A1 from Homo sapiens (Human).